Here is a 254-residue protein sequence, read N- to C-terminus: Leucyl/phenylalanyl-tRNA--protein transferase (254 aa).

Belongs to the L/F-transferase family.

The protein localises to the cytoplasm. It carries out the reaction N-terminal L-lysyl-[protein] + L-leucyl-tRNA(Leu) = N-terminal L-leucyl-L-lysyl-[protein] + tRNA(Leu) + H(+). It catalyses the reaction N-terminal L-arginyl-[protein] + L-leucyl-tRNA(Leu) = N-terminal L-leucyl-L-arginyl-[protein] + tRNA(Leu) + H(+). The catalysed reaction is L-phenylalanyl-tRNA(Phe) + an N-terminal L-alpha-aminoacyl-[protein] = an N-terminal L-phenylalanyl-L-alpha-aminoacyl-[protein] + tRNA(Phe). Its function is as follows. Functions in the N-end rule pathway of protein degradation where it conjugates Leu, Phe and, less efficiently, Met from aminoacyl-tRNAs to the N-termini of proteins containing an N-terminal arginine or lysine. The protein is Leucyl/phenylalanyl-tRNA--protein transferase of Burkholderia lata (strain ATCC 17760 / DSM 23089 / LMG 22485 / NCIMB 9086 / R18194 / 383).